Here is a 444-residue protein sequence, read N- to C-terminus: 23S rRNA (uracil(1939)-C(5))-methyltransferase RlmD (444 aa).

The 60-residue stretch at 5 to 64 (KPKLNLTSQTARIVNLSHDGRGIARVNGKATFIQGALPGEVVEFQYTRIKKDFDEGKLLS) folds into the TRAM domain. Residues Cys77, Cys83, Cys86, and Cys166 each contribute to the [4Fe-4S] cluster site. Gln276, Phe305, Asn310, Glu326, Asn353, and Asp374 together coordinate S-adenosyl-L-methionine. Cys400 functions as the Nucleophile in the catalytic mechanism.

The protein belongs to the class I-like SAM-binding methyltransferase superfamily. RNA M5U methyltransferase family. RlmD subfamily.

The catalysed reaction is uridine(1939) in 23S rRNA + S-adenosyl-L-methionine = 5-methyluridine(1939) in 23S rRNA + S-adenosyl-L-homocysteine + H(+). In terms of biological role, catalyzes the formation of 5-methyl-uridine at position 1939 (m5U1939) in 23S rRNA. This is 23S rRNA (uracil(1939)-C(5))-methyltransferase RlmD from Legionella pneumophila (strain Corby).